The primary structure comprises 134 residues: MILACDVGLKRIGIAALLNGVILPLEAILRQNRNQASRDLSDLLREKNIQVLVVGKPNESYADTNARIEHFIKLVDFKGEIVFINEDNSSIEAYENLEHLGKKNKWLAIKDGRLDSLSACRILERYCQQVLKNH.

It belongs to the YqgF nuclease family.

It is found in the cytoplasm. Could be a nuclease involved in processing of the 5'-end of pre-16S rRNA. The protein is Putative pre-16S rRNA nuclease of Helicobacter pylori (strain HPAG1).